A 364-amino-acid chain; its full sequence is Aminomethyltransferase (364 aa).

This sequence belongs to the GcvT family. In terms of assembly, the glycine cleavage system is composed of four proteins: P, T, L and H.

The enzyme catalyses N(6)-[(R)-S(8)-aminomethyldihydrolipoyl]-L-lysyl-[protein] + (6S)-5,6,7,8-tetrahydrofolate = N(6)-[(R)-dihydrolipoyl]-L-lysyl-[protein] + (6R)-5,10-methylene-5,6,7,8-tetrahydrofolate + NH4(+). The glycine cleavage system catalyzes the degradation of glycine. The polypeptide is Aminomethyltransferase (Klebsiella pneumoniae subsp. pneumoniae (strain ATCC 700721 / MGH 78578)).